A 187-amino-acid chain; its full sequence is Elongation factor P (187 aa).

The protein belongs to the elongation factor P family.

The protein resides in the cytoplasm. Its pathway is protein biosynthesis; polypeptide chain elongation. Functionally, involved in peptide bond synthesis. Stimulates efficient translation and peptide-bond synthesis on native or reconstituted 70S ribosomes in vitro. Probably functions indirectly by altering the affinity of the ribosome for aminoacyl-tRNA, thus increasing their reactivity as acceptors for peptidyl transferase. The sequence is that of Elongation factor P from Frankia casuarinae (strain DSM 45818 / CECT 9043 / HFP020203 / CcI3).